We begin with the raw amino-acid sequence, 409 residues long: Mitochondrial import inner membrane translocase subunit TIM50-B (409 aa).

The transit peptide at 1–42 (MSLIAIERVLCGWPKICRKLIVTSRSLTSGLRRALVKQPRKG) directs the protein to the mitochondrion. Topologically, residues 43-127 (GDVGKPGMEL…ELERAFRRMK (85 aa)) are mitochondrial matrix. The segment at 93–114 (PQTSEESNDEESRERRKLEEEE) is disordered. Basic and acidic residues predominate over residues 102–111 (EESRERRKLE). Residues 128–148 (LGFGLFGIGSMLFSFWAIYFY) form a helical membrane-spanning segment. Over 149–409 (GRPSLDEHGN…KNWTRGFINH (261 aa)) the chain is Mitochondrial intermembrane. One can recognise an FCP1 homology domain in the interval 205-348 (YVQPPYTLVL…FELTSFLSVL (144 aa)).

The protein belongs to the TIM50 family. As to quaternary structure, component of the TIM23 complex at least composed of Tim23, Tim17 (Tim17a1, Tim17a2 or Tim17b1) and a Tim50. In terms of tissue distribution, exclusively expressed in the testis.

The protein resides in the mitochondrion inner membrane. In terms of biological role, essential component of the TIM23 complex, a complex that mediates the translocation of transit peptide-containing proteins across the mitochondrial inner membrane. The chain is Mitochondrial import inner membrane translocase subunit TIM50-B (ttm2) from Drosophila melanogaster (Fruit fly).